The primary structure comprises 457 residues: MLSLYNTLTRQKEAFKPIEPGKVSMYVCGMTVYDLCHIGHARMLAAFDVIYRWLKASGYDVNYVRNITDIEDKIIKRALERGITPEQLVEETIADMRQDAAALGLLPPTHEPRATHHVGGMVAMIEQLIANGKAYPAANGDVYYAVREFEGYGKLSGRTLDKLRAGERVEVDPNKRDPLDFVLWKAAKPGEPSWDSPWGKGRPGWHIECSVMSCHHLGEHFDIHGGGEDLQFPHHENEIAQSEGAHGHQYVNYWLHNGFINVDGEKMSKSLGNFFTIRDVLQHFDGEVIRFFIVRSHYRSPVNYTDSILNDAKHGLTRLYTALRGIELPTSDGIDWNHAYAARFKAAMDDDFGTSEAVAVLFELAGEVNKSRDPQLARLLKDLGGVLGLLTRDPEVFLQGGVGEGELSAEQVEALIQARKDARAAKDWAESDRIRDELTAKGIVLEDGAGGTIWRRA.

Cys-28 lines the Zn(2+) pocket. The 'HIGH' region motif lies at Met-30–His-40. Residues Cys-209, His-234, and Glu-238 each contribute to the Zn(2+) site. The 'KMSKS' region motif lies at Lys-266 to Ser-270. ATP is bound at residue Lys-269.

The protein belongs to the class-I aminoacyl-tRNA synthetase family. Monomer. Zn(2+) is required as a cofactor.

The protein resides in the cytoplasm. The catalysed reaction is tRNA(Cys) + L-cysteine + ATP = L-cysteinyl-tRNA(Cys) + AMP + diphosphate. This chain is Cysteine--tRNA ligase, found in Chromobacterium violaceum (strain ATCC 12472 / DSM 30191 / JCM 1249 / CCUG 213 / NBRC 12614 / NCIMB 9131 / NCTC 9757 / MK).